Here is a 1433-residue protein sequence, read N- to C-terminus: DNA-directed RNA polymerase subunit beta' (1433 aa).

The Zn(2+) site is built by Cys66, Cys68, Cys81, and Cys84. Mg(2+) is bound by residues Asp474, Asp476, and Asp478. Zn(2+) contacts are provided by Cys823, Cys897, Cys904, and Cys907.

Belongs to the RNA polymerase beta' chain family. The RNAP catalytic core consists of 2 alpha, 1 beta, 1 beta' and 1 omega subunit. When a sigma factor is associated with the core the holoenzyme is formed, which can initiate transcription. Mg(2+) serves as cofactor. Requires Zn(2+) as cofactor.

The enzyme catalyses RNA(n) + a ribonucleoside 5'-triphosphate = RNA(n+1) + diphosphate. DNA-dependent RNA polymerase catalyzes the transcription of DNA into RNA using the four ribonucleoside triphosphates as substrates. The chain is DNA-directed RNA polymerase subunit beta' from Amoebophilus asiaticus (strain 5a2).